The primary structure comprises 226 residues: Histone H1.5 (226 aa).

A compositionally biased stretch (low complexity) spans 1 to 16; that stretch reads MSETAPAETATPAPVE. The tract at residues 1-44 is disordered; the sequence is MSETAPAETATPAPVEKSPAKKKATKKAAGAGAAKRKATGPPVS. S2 is subject to N-acetylserine; partial. S2 is modified (phosphoserine). T11 is subject to Phosphothreonine; by GSK3. K17 carries the N6-acetyllysine modification. S18 is subject to Phosphoserine. At K27 the chain carries N6-methyllysine. Residue K37 is modified to N6-(beta-hydroxybutyryl)lysine; alternate. At K37 the chain carries N6-succinyllysine; alternate. A Phosphothreonine modification is found at T39. The H15 domain occupies 39 to 112; it reads TGPPVSELIT…GASGSFKLNK (74 aa). N6-acetyllysine is present on K49. K55 carries the N6-(beta-hydroxybutyryl)lysine modification. R57 is modified (citrulline). N6-(beta-hydroxybutyryl)lysine is present on K67. Residue K78 is modified to N6-acetyllysine. 3 positions are modified to N6-(beta-hydroxybutyryl)lysine: K88, K93, and K109. A disordered region spans residues 98–226; sequence QTKGTGASGS…KAKKAAAKKK (129 aa). Positions 122-133 are enriched in basic residues; the sequence is KAKKAGAAKAKK. 2 positions are modified to phosphothreonine: T138 and T155. The segment covering 140-161 has biased composition (basic residues); the sequence is KKAKKAAGAKKAVKKTPKKAKK. K168 carries the post-translational modification N6-acetyllysine. A compositionally biased stretch (basic residues) spans 169 to 187; that stretch reads KVAKSPKKAKAAAKPKKAT. A phosphoserine mark is found at S173 and S189. The segment covering 194-226 has biased composition (basic residues); it reads KAVKPKAAKPKAAKPKAAKPKAAKAKKAAAKKK.

This sequence belongs to the histone H1/H5 family. As to quaternary structure, interacts with MSX1. Post-translationally, H1 histones are progressively phosphorylated during the cell cycle, becoming maximally phosphorylated during late G2 phase and M phase, and being dephosphorylated sharply thereafter. Phosphorylated at Thr-11 by GSK3B during mitosis in prometaphase and dephosphorylated in telophase. In terms of processing, citrullination at Arg-57 (H1R54ci) by PADI4 takes place within the DNA-binding site of H1 and results in its displacement from chromatin and global chromatin decondensation, thereby promoting pluripotency and stem cell maintenance. In terms of tissue distribution, ubiquitous. Expressed in the majority of the cell lines tested and in testis.

It localises to the nucleus. The protein localises to the chromosome. In terms of biological role, histone H1 protein binds to linker DNA between nucleosomes forming the macromolecular structure known as the chromatin fiber. Histones H1 are necessary for the condensation of nucleosome chains into higher-order structured fibers. Also acts as a regulator of individual gene transcription through chromatin remodeling, nucleosome spacing and DNA methylation. In Homo sapiens (Human), this protein is Histone H1.5.